The sequence spans 141 residues: Large ribosomal subunit protein uL16 (141 aa).

Belongs to the universal ribosomal protein uL16 family. In terms of assembly, part of the 50S ribosomal subunit.

Binds 23S rRNA and is also seen to make contacts with the A and possibly P site tRNAs. This is Large ribosomal subunit protein uL16 from Geobacillus kaustophilus (strain HTA426).